The primary structure comprises 364 residues: Solute carrier family 35 member C2 (364 aa).

A run of 2 helical transmembrane segments spans residues Ala14–Tyr34 and Phe42–Leu62. Asn102 carries N-linked (GlcNAc...) asparagine glycosylation. 7 helical membrane-spanning segments follow: residues Ser104–Ile124, Leu136–Tyr156, Phe166–Leu186, Phe202–Leu222, Leu238–Phe258, Leu272–Gly292, and Ile295–Ala315. Phosphoserine occurs at positions 335 and 336.

Belongs to the TPT transporter family. SLC35C subfamily.

The protein resides in the golgi apparatus. The protein localises to the cis-Golgi network membrane. It localises to the endoplasmic reticulum-Golgi intermediate compartment membrane. May play an important role in the cellular response to tissue hypoxia. May be either a GDP-fucose transporter that competes with SLC35C1 for GDP-fucose, or a factor that otherwise enhances the fucosylation of Notch and is required for optimal Notch signaling in mammalian cells. The chain is Solute carrier family 35 member C2 (Slc35c2) from Mus musculus (Mouse).